The primary structure comprises 213 residues: Motile sperm domain-containing protein 1 (213 aa).

The MSP domain maps to 16–143; that stretch reads PVFVFPTELI…KEHLTESVFF (128 aa). The next 2 helical transmembrane spans lie at 159 to 179 and 191 to 211; these read SLLTVFLGVVCIAALMLPTLG and LSVNQKLVAAYILGLITMAIL. The short motif at 205 to 208 is the Nuclear export signal element; the sequence is LITM.

Its subcellular location is the endoplasmic reticulum membrane. It is found in the golgi apparatus membrane. Its function is as follows. Plays a role in differentiation and/or proliferation of mesenchymal stem cells. Proposed to be involved in epithelial-to-mesenchymal transition (EMT). However, another study suggests that it is not required for EMT or stem cell self-renewal and acts during later stages of differentiation. The sequence is that of Motile sperm domain-containing protein 1 (Mospd1) from Rattus norvegicus (Rat).